A 393-amino-acid chain; its full sequence is NAD(P)H-quinone oxidoreductase subunit H, chloroplastic (393 aa).

Belongs to the complex I 49 kDa subunit family. In terms of assembly, NDH is composed of at least 16 different subunits, 5 of which are encoded in the nucleus.

It localises to the plastid. Its subcellular location is the chloroplast thylakoid membrane. It catalyses the reaction a plastoquinone + NADH + (n+1) H(+)(in) = a plastoquinol + NAD(+) + n H(+)(out). The catalysed reaction is a plastoquinone + NADPH + (n+1) H(+)(in) = a plastoquinol + NADP(+) + n H(+)(out). Its function is as follows. NDH shuttles electrons from NAD(P)H:plastoquinone, via FMN and iron-sulfur (Fe-S) centers, to quinones in the photosynthetic chain and possibly in a chloroplast respiratory chain. The immediate electron acceptor for the enzyme in this species is believed to be plastoquinone. Couples the redox reaction to proton translocation, and thus conserves the redox energy in a proton gradient. This is NAD(P)H-quinone oxidoreductase subunit H, chloroplastic from Lobularia maritima (Sweet alyssum).